A 323-amino-acid polypeptide reads, in one-letter code: Transcription factor MYB108 (323 aa).

HTH myb-type domains lie at 16–68 (EMDL…LNYL) and 69–123 (RPDV…QKHA). 2 consecutive DNA-binding regions (H-T-H motif) follow at residues 44 to 68 (WNSLSRCAGLQRTGKSCRLRWLNYL) and 96 to 119 (WSKIAQYLPGRTDNEIKNYWRTRV).

In terms of assembly, interacts with BOI, but not with BRG1. In terms of processing, ubiquitinated in vitro by BOI. In terms of tissue distribution, expressed specifically in flowers. Restricted to anthers in maturing flowers. Strongest expression in the vascular and connective tissue where the anther attaches to the filament. Not detected in pollen.

It localises to the nucleus. In terms of biological role, transcription factor contributing to the regulation of stamen maturation and male fertility in response to jasmonate signaling. Required for correct timing of anther dehiscence. Acts as a negative regulator of abscisic acid-induced cell death. Not involved in the regulation of BOI. Regulated by MYB21 and at a lower level by MYB24. Negatively regulated by the proteasome in an SCF(COI1) E3 ubiquitin-protein ligase complex-dependent manner. This chain is Transcription factor MYB108 (MYB108), found in Arabidopsis thaliana (Mouse-ear cress).